We begin with the raw amino-acid sequence, 164 residues long: Phosphopantetheine adenylyltransferase (164 aa).

A substrate-binding site is contributed by S10. ATP contacts are provided by residues 10 to 11 and H18; that span reads SF. Substrate contacts are provided by K42, T79, and R93. Residues 94 to 96, E104, and 129 to 135 contribute to the ATP site; these read GLR and VRPITAS.

Belongs to the bacterial CoaD family. As to quaternary structure, homohexamer. It depends on Mg(2+) as a cofactor.

It localises to the cytoplasm. The catalysed reaction is (R)-4'-phosphopantetheine + ATP + H(+) = 3'-dephospho-CoA + diphosphate. It functions in the pathway cofactor biosynthesis; coenzyme A biosynthesis; CoA from (R)-pantothenate: step 4/5. Functionally, reversibly transfers an adenylyl group from ATP to 4'-phosphopantetheine, yielding dephospho-CoA (dPCoA) and pyrophosphate. The polypeptide is Phosphopantetheine adenylyltransferase (Bradyrhizobium sp. (strain ORS 278)).